Reading from the N-terminus, the 105-residue chain is Cytochrome c-553-like (105 aa).

A signal peptide spans 1–29; that stretch reads MAGIVSLVILAVALFSFMNFDPYVSQVLA. Cys-45, Cys-48, His-49, and Met-85 together coordinate heme c.

Binds 1 heme c group covalently per subunit.

This chain is Cytochrome c-553-like (cytM), found in Synechocystis sp. (strain ATCC 27184 / PCC 6803 / Kazusa).